Consider the following 329-residue polypeptide: Phosphate acyltransferase (329 aa).

It belongs to the PlsX family. Homodimer. Probably interacts with PlsY.

It localises to the cytoplasm. It carries out the reaction a fatty acyl-[ACP] + phosphate = an acyl phosphate + holo-[ACP]. The protein operates within lipid metabolism; phospholipid metabolism. Catalyzes the reversible formation of acyl-phosphate (acyl-PO(4)) from acyl-[acyl-carrier-protein] (acyl-ACP). This enzyme utilizes acyl-ACP as fatty acyl donor, but not acyl-CoA. This Geobacillus sp. (strain WCH70) protein is Phosphate acyltransferase.